A 92-amino-acid chain; its full sequence is SPbeta prophage-derived uncharacterized protein YoqM (92 aa).

The first 25 residues, 1 to 25, serve as a signal peptide directing secretion; that stretch reads MKLRKVLTGSVLSLGLLVSASPAFA.

The protein is SPbeta prophage-derived uncharacterized protein YoqM (yoqM) of Bacillus subtilis (strain 168).